Reading from the N-terminus, the 600-residue chain is Glutamine--fructose-6-phosphate aminotransferase [isomerizing] (600 aa).

The active-site Nucleophile; for GATase activity is the cysteine 2. Positions 2–217 (CGIVGFIGEQ…DKEIVIVMKE (216 aa)) constitute a Glutamine amidotransferase type-2 domain. 2 consecutive SIS domains span residues 283-422 (IRNA…AKGE) and 452-590 (LAKQ…VDKP). The For Fru-6P isomerization activity role is filled by lysine 595.

In terms of assembly, homodimer.

It localises to the cytoplasm. The catalysed reaction is D-fructose 6-phosphate + L-glutamine = D-glucosamine 6-phosphate + L-glutamate. Its function is as follows. Catalyzes the first step in hexosamine metabolism, converting fructose-6P into glucosamine-6P using glutamine as a nitrogen source. This Bacillus anthracis protein is Glutamine--fructose-6-phosphate aminotransferase [isomerizing].